A 125-amino-acid chain; its full sequence is NADH-ubiquinone oxidoreductase chain 1 (125 aa).

3 helical membrane passes run 5–25 (IFAFFELITFLVPVLLAVAFL), 74–94 (YLFFASPVLFLTLALLLWNFM), and 105–125 (LSLLLVLGLSSLSVYAILGSG).

It belongs to the complex I subunit 1 family.

The protein resides in the mitochondrion inner membrane. It carries out the reaction a ubiquinone + NADH + 5 H(+)(in) = a ubiquinol + NAD(+) + 4 H(+)(out). Functionally, core subunit of the mitochondrial membrane respiratory chain NADH dehydrogenase (Complex I) that is believed to belong to the minimal assembly required for catalysis. Complex I functions in the transfer of electrons from NADH to the respiratory chain. The immediate electron acceptor for the enzyme is believed to be ubiquinone. This chain is NADH-ubiquinone oxidoreductase chain 1 (ND1), found in Arbacia lixula (Black urchin).